The sequence spans 626 residues: Polygalacturonase 1 beta-like protein 3 (626 aa).

The first 23 residues, 1–23 (MLKQFLLLQSFSFFLFNVVIVGG), serve as a signal peptide directing secretion. The stretch at 117–120 (FSVY) is one FXXY 1 repeat. N-linked (GlcNAc...) asparagine glycosylation occurs at N124. FXXY repeat units lie at residues 125–128 (FTNY), 139–142 (FKNY), 153–156 (FRRY), 167–170 (FTVY), 181–184 (FNSY), 195–198 (FTNY), 209–212 (FTAY), 223–226 (FKTY), 238–241 (FTSY), 252–255 (FTSY), and 266–269 (FSNY). The N-linked (GlcNAc...) asparagine glycan is linked to N141. N277 carries an N-linked (GlcNAc...) asparagine glycan. FXXY repeat units follow at residues 280–283 (FTSY), 294–297 (FNNY), 308–311 (FANY), 322–325 (FSSY), 336–339 (FVNY), 350–353 (FTGY), and 364–367 (FKTY). N370 is a glycosylation site (N-linked (GlcNAc...) asparagine). FXXY repeat units follow at residues 373-376 (FKDY) and 383-386 (FAKY). 2 N-linked (GlcNAc...) asparagine glycosylation sites follow: N387 and N465. Positions 411 to 625 (FFRESSLKEG…FENDMNWAIA (215 aa)) constitute a BURP domain.

In terms of tissue distribution, expressed in flowers and stems. Detected in trichomes, guard cells, root vascular tissue, root hairs, pollen sacs, sepals and styles of pistils.

The protein localises to the secreted. The protein resides in the extracellular space. It is found in the apoplast. Its subcellular location is the cell wall. Its function is as follows. Involved in cell size determination. May serve as a chaperone for expansins through the secretory pathway. The protein is Polygalacturonase 1 beta-like protein 3 of Arabidopsis thaliana (Mouse-ear cress).